The sequence spans 39 residues: Gonadal protein gdl-ORF39 (39 aa).

As to expression, in bundles of maturing sperm of larval, pupal and adult males.

The protein is Gonadal protein gdl-ORF39 (gdl-ORF39) of Drosophila melanogaster (Fruit fly).